A 347-amino-acid chain; its full sequence is S-adenosylmethionine:tRNA ribosyltransferase-isomerase (347 aa).

The protein belongs to the QueA family. As to quaternary structure, monomer.

Its subcellular location is the cytoplasm. It catalyses the reaction 7-aminomethyl-7-carbaguanosine(34) in tRNA + S-adenosyl-L-methionine = epoxyqueuosine(34) in tRNA + adenine + L-methionine + 2 H(+). It participates in tRNA modification; tRNA-queuosine biosynthesis. Functionally, transfers and isomerizes the ribose moiety from AdoMet to the 7-aminomethyl group of 7-deazaguanine (preQ1-tRNA) to give epoxyqueuosine (oQ-tRNA). The chain is S-adenosylmethionine:tRNA ribosyltransferase-isomerase from Streptococcus thermophilus (strain CNRZ 1066).